Consider the following 392-residue polypeptide: MIDEKDKPYLEEKVKQASNILPQKIVDDLKNLILNKEIIVTRDEIDKIFDLAIKEYSEGLIAPGEAIGIVAAQSVGEPGTQMTLRTFHFAGIRELNVTLGLPRLIEIVDAKKVPSTPMMTIYLTDEYKRDRDKALEVARKLEYTKIENVVSSTSIDIASMSIILQLDNEMLKDKGVTVDDVKKAIGRLKLGDFMIEESEDSTLNINFANIDSIAALFKLRDKILNTKIKGIKGIKRAIVQKKGDEYIILTDGSNLSGVLSVKGVDVAKVETNNIREIEEVFGIEAAREIIIREISKVLAEQGLDVDIRHILLIADVMTRTGIVRQIGRHGVTGEKNSVLARAAFEVTVKHLLDAAARGDVEEFKGVVENIIIGHPIKLGTGMVELTMRPILR.

This sequence belongs to the RNA polymerase beta' chain family. As to quaternary structure, part of the 13-subunit RNA polymerase complex.

The protein localises to the cytoplasm. It catalyses the reaction RNA(n) + a ribonucleoside 5'-triphosphate = RNA(n+1) + diphosphate. In terms of biological role, DNA-dependent RNA polymerase (RNAP) catalyzes the transcription of DNA into RNA using the four ribonucleoside triphosphates as substrates. Forms part of the jaw domain. The sequence is that of DNA-directed RNA polymerase subunit Rpo1C from Saccharolobus solfataricus (strain ATCC 35092 / DSM 1617 / JCM 11322 / P2) (Sulfolobus solfataricus).